The chain runs to 298 residues: Type II methyltransferase M.MjaIV (298 aa).

It catalyses the reaction a 2'-deoxyadenosine in DNA + S-adenosyl-L-methionine = an N(6)-methyl-2'-deoxyadenosine in DNA + S-adenosyl-L-homocysteine + H(+). In terms of biological role, a methylase that recognizes the double-stranded sequence 5'-GTNNAC-3', methylates A-5 on both strands, and protects the DNA from cleavage by the MjaIV endonuclease. The chain is Type II methyltransferase M.MjaIV (mjaIVMP) from Methanocaldococcus jannaschii (strain ATCC 43067 / DSM 2661 / JAL-1 / JCM 10045 / NBRC 100440) (Methanococcus jannaschii).